A 152-amino-acid polypeptide reads, in one-letter code: Large ribosomal subunit protein uL15 (152 aa).

The tract at residues 1–66 (MLQLHTIKPN…PLHRRLPKKG (66 aa)) is disordered. A compositionally biased stretch (gly residues) spans 24 to 36 (ESSGLGKTCGKGN).

The protein belongs to the universal ribosomal protein uL15 family. In terms of assembly, part of the 50S ribosomal subunit.

Its function is as follows. Binds to the 23S rRNA. The protein is Large ribosomal subunit protein uL15 of Akkermansia muciniphila (strain ATCC BAA-835 / DSM 22959 / JCM 33894 / BCRC 81048 / CCUG 64013 / CIP 107961 / Muc).